Consider the following 322-residue polypeptide: DNA primase small subunit PriS (322 aa).

Catalysis depends on residues Asp-100, Asp-102, and Asp-228.

The protein belongs to the eukaryotic-type primase small subunit family. As to quaternary structure, heterodimer of a small subunit (PriS) and a large subunit (PriL). Mg(2+) is required as a cofactor. The cofactor is Mn(2+).

In terms of biological role, catalytic subunit of DNA primase, an RNA polymerase that catalyzes the synthesis of short RNA molecules used as primers for DNA polymerase during DNA replication. The small subunit contains the primase catalytic core and has DNA synthesis activity on its own. Binding to the large subunit stabilizes and modulates the activity, increasing the rate of DNA synthesis while decreasing the length of the DNA fragments, and conferring RNA synthesis capability. The DNA polymerase activity may enable DNA primase to also catalyze primer extension after primer synthesis. May also play a role in DNA repair. The polypeptide is DNA primase small subunit PriS (Sulfolobus acidocaldarius (strain ATCC 33909 / DSM 639 / JCM 8929 / NBRC 15157 / NCIMB 11770)).